We begin with the raw amino-acid sequence, 475 residues long: Transmembrane protein 181 (475 aa).

9 consecutive transmembrane segments (helical) span residues 16-36 (HFVL…FVGI), 131-151 (EIIV…IVGF), 175-195 (LEIW…CLFA), 214-234 (SVLL…SFLV), 245-265 (LFQS…YHGI), 276-296 (FYLP…TLGI), 320-340 (MKVF…FLIV), 356-376 (LKFL…ILYL), and 401-421 (FLSF…VYSP). S443 is modified (phosphoserine).

This sequence belongs to the TMEM181 family. In terms of assembly, interacts with cytolethal distending toxin.

The protein resides in the membrane. Functionally, mediates action of cytolethal distending toxins (CDT), which are secreted by many pathogenic bacteria. Expression level of TMEM181 is rate-limiting for intoxication. The sequence is that of Transmembrane protein 181 (TMEM181) from Homo sapiens (Human).